The following is a 146-amino-acid chain: VHLTPEEKTAVTTLWGKVNVDEVGGEALGRLLVVYPWTQRFFESFGDLSSPDAVMGNPKVKAHGKKVLGAFSDGLAHLDNLKGTFAQLSELHCDKLHVDPENFKLLGNVLVCVLAHHFGKEFTPQVQAAYQKVVAGVANALAHKYH.

V1 bears the N-acetylvaline mark. In terms of domain architecture, Globin spans 2–146 (HLTPEEKTAV…VANALAHKYH (145 aa)). The residue at position 12 (T12) is a Phosphothreonine. A Phosphoserine modification is found at S44. The residue at position 59 (K59) is an N6-acetyllysine. H63 provides a ligand contact to heme b. Residue K82 is modified to N6-acetyllysine. H92 lines the heme b pocket. C93 is modified (S-nitrosocysteine). K144 bears the N6-acetyllysine mark.

It belongs to the globin family. As to quaternary structure, heterotetramer of two alpha chains and two beta chains. In terms of tissue distribution, red blood cells.

In terms of biological role, involved in oxygen transport from the lung to the various peripheral tissues. The polypeptide is Hemoglobin subunit beta (HBB) (Chlorocebus aethiops (Green monkey)).